Reading from the N-terminus, the 329-residue chain is GTPase Obg (329 aa).

One can recognise an Obg domain in the interval 1 to 159 (MQFIDQAIID…WSLQLELKLL (159 aa)). In terms of domain architecture, OBG-type G spans 160-328 (AEVGIIGLPN…LLSSIWYELG (169 aa)). Residues 166 to 173 (GLPNAGKS), 191 to 195 (FTTLI), 213 to 216 (DIPG), 280 to 283 (NKKE), and 309 to 311 (SAV) contribute to the ATP site. Residues Ser-173 and Thr-193 each contribute to the Mg(2+) site.

The protein belongs to the TRAFAC class OBG-HflX-like GTPase superfamily. OBG GTPase family. Monomer. It depends on Mg(2+) as a cofactor.

The protein localises to the cytoplasm. An essential GTPase which binds GTP, GDP and possibly (p)ppGpp with moderate affinity, with high nucleotide exchange rates and a fairly low GTP hydrolysis rate. Plays a role in control of the cell cycle, stress response, ribosome biogenesis and in those bacteria that undergo differentiation, in morphogenesis control. In Prochlorococcus marinus (strain NATL1A), this protein is GTPase Obg.